A 317-amino-acid chain; its full sequence is Melanocyte-stimulating hormone receptor (317 aa).

Residues 1–37 are Extracellular-facing; sequence MPMQGAQRRLLGSLNSIPTATPNLGLAANHTGAPCLE. Residue Asn29 is glycosylated (N-linked (GlcNAc...) asparagine). A helical membrane pass occupies residues 38–63; the sequence is VSIPDWLFLSLGLVSLVQNVLVVAAI. At 64 to 72 the chain is on the cytoplasmic side; that stretch reads AKNRNLHSP. Residues 73-93 form a helical membrane-spanning segment; sequence MYCFICCLALSDLLVSGSNML. Residues 94-118 lie on the Extracellular side of the membrane; that stretch reads ETAVILMLEAGALATRASVVQQLQN. A helical membrane pass occupies residues 119-140; the sequence is TIDVLTCSSMLCSLCFLGAIAL. Over 141 to 163 the chain is Cytoplasmic; that stretch reads DRYVSIFYALRYHSIVTLPRARR. Residues 164-183 traverse the membrane as a helical segment; sequence AIAATWVASVLSSTLFIAYC. Residues 184–191 lie on the Extracellular side of the membrane; sequence DHAAVLLC. Residues 192-211 traverse the membrane as a helical segment; that stretch reads LVVFFLAMLVLMAVLYVHML. The Cytoplasmic portion of the chain corresponds to 212–240; it reads ARACQHAQGITRLHKRQLPAHQGFGLRGA. The chain crosses the membrane as a helical span at residues 241–266; it reads ATLTILLGIFFLCWGPFFLHLMLVVL. Residues 267–279 are Extracellular-facing; sequence CPQHLTCSCIFKN. The chain crosses the membrane as a helical span at residues 280-300; it reads FKVFLTLIICNTIIDPLIYAF. At 301–317 the chain is on the cytoplasmic side; sequence RSQELCRTLKEVLLCSW. Cys315 carries S-palmitoyl cysteine lipidation.

This sequence belongs to the G-protein coupled receptor 1 family. As to quaternary structure, interacts with MGRN1, but does not undergo MGRN1-mediated ubiquitination; this interaction competes with GNAS-binding and thus inhibits agonist-induced cAMP production. Interacts with OPN3; the interaction results in a decrease in MC1R-mediated cAMP signaling and ultimately a decrease in melanin production in melanocytes.

The protein localises to the cell membrane. Functionally, receptor for MSH (alpha, beta and gamma) and ACTH. The activity of this receptor is mediated by G proteins which activate adenylate cyclase. Mediates melanogenesis, the production of eumelanin (black/brown) and phaeomelanin (red/yellow), via regulation of cAMP signaling in melanocytes. The chain is Melanocyte-stimulating hormone receptor (MC1R) from Alouatta seniculus (Red howler monkey).